The sequence spans 35 residues: Cytochrome b6-f complex subunit 5 (35 aa).

Residues leucine 5–alanine 25 form a helical membrane-spanning segment.

Belongs to the PetG family. As to quaternary structure, the 4 large subunits of the cytochrome b6-f complex are cytochrome b6, subunit IV (17 kDa polypeptide, PetD), cytochrome f and the Rieske protein, while the 4 small subunits are PetG, PetL, PetM and PetN. The complex functions as a dimer.

It localises to the plastid. The protein resides in the organellar chromatophore thylakoid membrane. Component of the cytochrome b6-f complex, which mediates electron transfer between photosystem II (PSII) and photosystem I (PSI), cyclic electron flow around PSI, and state transitions. PetG is required for either the stability or assembly of the cytochrome b6-f complex. This chain is Cytochrome b6-f complex subunit 5, found in Paulinella chromatophora.